The primary structure comprises 489 residues: Glucose-6-phosphate 1-dehydrogenase (489 aa).

Arginine 50 and lysine 151 together coordinate NADP(+). Positions 181, 185, 219, and 238 each coordinate substrate. Histidine 243 acts as the Proton acceptor in catalysis. 2 residues coordinate substrate: lysine 341 and lysine 346.

This sequence belongs to the glucose-6-phosphate dehydrogenase family. In terms of assembly, homodimer.

It carries out the reaction D-glucose 6-phosphate + NADP(+) = 6-phospho-D-glucono-1,5-lactone + NADPH + H(+). The protein operates within carbohydrate degradation; pentose phosphate pathway; D-ribulose 5-phosphate from D-glucose 6-phosphate (oxidative stage): step 1/3. In terms of biological role, catalyzes the oxidation of glucose 6-phosphate to 6-phosphogluconolactone. The sequence is that of Glucose-6-phosphate 1-dehydrogenase from Gluconobacter oxydans (strain 621H) (Gluconobacter suboxydans).